An 883-amino-acid polypeptide reads, in one-letter code: Alanine--tRNA ligase (883 aa).

Zn(2+) contacts are provided by His560, His564, Cys665, and His669.

This sequence belongs to the class-II aminoacyl-tRNA synthetase family. Requires Zn(2+) as cofactor.

It localises to the cytoplasm. It catalyses the reaction tRNA(Ala) + L-alanine + ATP = L-alanyl-tRNA(Ala) + AMP + diphosphate. In terms of biological role, catalyzes the attachment of alanine to tRNA(Ala) in a two-step reaction: alanine is first activated by ATP to form Ala-AMP and then transferred to the acceptor end of tRNA(Ala). Also edits incorrectly charged Ser-tRNA(Ala) and Gly-tRNA(Ala) via its editing domain. This is Alanine--tRNA ligase from Mesomycoplasma hyopneumoniae (strain J / ATCC 25934 / NCTC 10110) (Mycoplasma hyopneumoniae).